The sequence spans 437 residues: Protein translocase subunit SecY (437 aa).

Helical transmembrane passes span 19–39 (LFTLGIIVIYRIGTHIPIPGV), 69–89 (LLQITIFALGIMPYITASIIL), 122–142 (VALAVLQGTGLVATARSGALF), 157–177 (IFTTLTMVVTMTAGTAVVMWL), 189–209 (GMSILMFISIAATFPSALWSI), 219–239 (WIEFGIVIAVGLVMVALVVFV), 275–295 (GIIPVIFASSLLYIPALVVQF), 318–338 (HITVYFFLIIFFAFFYVAISF), 378–398 (GSLYLGLIALVPTMALAPLGA), and 400–420 (QNFPFGGTSILIIVGVGLETV).

It belongs to the SecY/SEC61-alpha family. As to quaternary structure, component of the Sec protein translocase complex. Heterotrimer consisting of SecY, SecE and SecG subunits. The heterotrimers can form oligomers, although 1 heterotrimer is thought to be able to translocate proteins. Interacts with the ribosome. Interacts with SecDF, and other proteins may be involved. Interacts with SecA.

The protein resides in the cell membrane. In terms of biological role, the central subunit of the protein translocation channel SecYEG. Consists of two halves formed by TMs 1-5 and 6-10. These two domains form a lateral gate at the front which open onto the bilayer between TMs 2 and 7, and are clamped together by SecE at the back. The channel is closed by both a pore ring composed of hydrophobic SecY resides and a short helix (helix 2A) on the extracellular side of the membrane which forms a plug. The plug probably moves laterally to allow the channel to open. The ring and the pore may move independently. In Streptomyces scabiei, this protein is Protein translocase subunit SecY.